The primary structure comprises 248 residues: Protein PIMREG (248 aa).

A compositionally biased stretch (polar residues) spans 1–10 (MASRWQNMGT). The tract at residues 1-32 (MASRWQNMGTSVRRRSLQHQEQLEDSKELQPV) is disordered. 2 positions are modified to phosphoserine: Ser-11 and Ser-16. 2 short sequence motifs (D-box) span residues 14–17 (RRSL) and 53–56 (RLPL). Residues 117 to 205 (KARRRKRGAQ…PSESDSDLEP (89 aa)) are disordered. Ser-129 carries the phosphoserine modification. Phosphoserine; by UHMK1; in vitro is present on Ser-131. 2 stretches are compositionally biased toward polar residues: residues 132–143 (PTHSLSQKSTRL) and 186–198 (PYSS…SPSE). 2 positions are modified to phosphoserine: Ser-199 and Ser-201.

In terms of assembly, isoform 1 and isoform 2 interact with PICALM; this interaction may target PICALM to the nucleus. During mitosis, associates with HDAC2 and MTA2 subunits of the chromatin-remodeling NuRD complex; this association is strongest at prometaphase and decreases as the cell progresses through metaphase and anaphase. Ubiquitinated by the anaphase-promoting complex/cyclosome (APC/C) complex in the presence of FZR1, leading to its degradation by the proteasome during mitotic exit. However, degradation is not essential for normal mitotic progression within a single cell cycle. As to expression, expressed in thymus (at protein level). Detected in spleen, colon, ovary and small intestines.

Its subcellular location is the nucleus. The protein localises to the nucleolus. In terms of biological role, during mitosis, may play a role in the control of metaphase-to-anaphase transition. The polypeptide is Protein PIMREG (Homo sapiens (Human)).